The following is a 240-amino-acid chain: Dephospho-CoA kinase domain-containing protein (240 aa).

The DPCK domain occupies 3–207 (LVGLTGGIAS…RSMEYLPLRL (205 aa)). 8–15 (GGIASGKS) serves as a coordination point for ATP.

It belongs to the CoaE family.

The chain is Dephospho-CoA kinase domain-containing protein (Dcakd) from Rattus norvegicus (Rat).